We begin with the raw amino-acid sequence, 103 residues long: Co-chaperonin GroES (103 aa).

The protein belongs to the GroES chaperonin family. Heptamer of 7 subunits arranged in a ring. Interacts with the chaperonin GroEL.

It is found in the cytoplasm. Functionally, together with the chaperonin GroEL, plays an essential role in assisting protein folding. The GroEL-GroES system forms a nano-cage that allows encapsulation of the non-native substrate proteins and provides a physical environment optimized to promote and accelerate protein folding. GroES binds to the apical surface of the GroEL ring, thereby capping the opening of the GroEL channel. The protein is Co-chaperonin GroES of Trichodesmium erythraeum (strain IMS101).